A 461-amino-acid polypeptide reads, in one-letter code: Flavin-containing monooxygenase FMO GS-OX4 (461 aa).

17–22 (GAGAAG) is a binding site for FAD. 211 to 216 (GNFASG) contributes to the NADP(+) binding site.

This sequence belongs to the FMO family.

The catalysed reaction is a (Z)-omega-(methylsulfanyl)-N-sulfo-alkylhydroximate S-glucoside + NADPH + O2 + H(+) = a (Z)-omega-(methylsulfinyl)-alkyl-glucosinolate + NADP(+) + H2O. Catalyzes the conversion of methylthioalkyl glucosinolates of any chain length into methylsulfinylalkyl glucosinolates. This is Flavin-containing monooxygenase FMO GS-OX4 (FMOGS-OX4) from Arabidopsis thaliana (Mouse-ear cress).